A 217-amino-acid chain; its full sequence is Adr-2-binding protein 1 (217 aa).

The interval 33–65 (ARPEPQHDSLKRRNTTSSIAKKKAKMTRGDEQI) is disordered. Positions 44 to 58 (RRNTTSSIAKKKAKM) are enriched in basic residues.

As to quaternary structure, interacts with double-stranded RNA-specific adenosine deaminase adr-2. In terms of tissue distribution, expressed in main body hypodermal cells, the hypodermal seam cells, pharynx, intestine and some neurons.

The protein resides in the nucleus. Required for the A-I editing activity of the double-stranded RNA-specific adenosine deaminase adr-2 by facilitating adr-2 nuclear localization. The chain is Adr-2-binding protein 1 from Caenorhabditis elegans.